Consider the following 625-residue polypeptide: tRNA uridine 5-carboxymethylaminomethyl modification enzyme MnmG (625 aa).

Residue 13–18 participates in FAD binding; it reads GGGHAG. 273–287 provides a ligand contact to NAD(+); that stretch reads GPRYCPSIEDKVVRF.

This sequence belongs to the MnmG family. As to quaternary structure, homodimer. Heterotetramer of two MnmE and two MnmG subunits. The cofactor is FAD.

It localises to the cytoplasm. Functionally, NAD-binding protein involved in the addition of a carboxymethylaminomethyl (cmnm) group at the wobble position (U34) of certain tRNAs, forming tRNA-cmnm(5)s(2)U34. This chain is tRNA uridine 5-carboxymethylaminomethyl modification enzyme MnmG, found in Methylococcus capsulatus (strain ATCC 33009 / NCIMB 11132 / Bath).